Here is a 407-residue protein sequence, read N- to C-terminus: 1-deoxy-D-xylulose 5-phosphate reductoisomerase (407 aa).

6 residues coordinate NADPH: T25, G26, S27, I28, N53, and N136. Residue K137 participates in 1-deoxy-D-xylulose 5-phosphate binding. Residue E138 coordinates NADPH. D162 lines the Mn(2+) pocket. The 1-deoxy-D-xylulose 5-phosphate site is built by S163, E164, S188, and H211. E164 is a binding site for Mn(2+). G217 is a binding site for NADPH. Residues S224, N229, K230, and E233 each coordinate 1-deoxy-D-xylulose 5-phosphate. E233 is a Mn(2+) binding site.

It belongs to the DXR family. Requires Mg(2+) as cofactor. The cofactor is Mn(2+).

It carries out the reaction 2-C-methyl-D-erythritol 4-phosphate + NADP(+) = 1-deoxy-D-xylulose 5-phosphate + NADPH + H(+). It functions in the pathway isoprenoid biosynthesis; isopentenyl diphosphate biosynthesis via DXP pathway; isopentenyl diphosphate from 1-deoxy-D-xylulose 5-phosphate: step 1/6. In terms of biological role, catalyzes the NADPH-dependent rearrangement and reduction of 1-deoxy-D-xylulose-5-phosphate (DXP) to 2-C-methyl-D-erythritol 4-phosphate (MEP). This chain is 1-deoxy-D-xylulose 5-phosphate reductoisomerase, found in Rhodopseudomonas palustris (strain TIE-1).